We begin with the raw amino-acid sequence, 484 residues long: Glycogen synthase (484 aa).

K20 lines the ADP-alpha-D-glucose pocket.

The protein belongs to the glycosyltransferase 1 family. Bacterial/plant glycogen synthase subfamily.

The catalysed reaction is [(1-&gt;4)-alpha-D-glucosyl](n) + ADP-alpha-D-glucose = [(1-&gt;4)-alpha-D-glucosyl](n+1) + ADP + H(+). Its pathway is glycan biosynthesis; glycogen biosynthesis. Functionally, synthesizes alpha-1,4-glucan chains using ADP-glucose. This is Glycogen synthase from Vibrio atlanticus (strain LGP32) (Vibrio splendidus (strain Mel32)).